Reading from the N-terminus, the 1336-residue chain is Immunoglobulin superfamily member 1 (1336 aa).

The signal sequence occupies residues 1–28 (MTLDRPGEGATMLKTFTVLLFCIRMSLG). Residues 29 to 518 (MTSIVMDPQP…GYLTWNYVLN (490 aa)) lie on the Extracellular side of the membrane. Ig-like C2-type domains are found at residues 38–122 (PELW…KVLE), 137–222 (QAET…LVVA), 226–312 (PKPT…SDVL), 321–408 (PKTW…PSHN), and 419–500 (PKPS…HRSE). Residue Asn-53 is glycosylated (N-linked (GlcNAc...) asparagine). Cysteines 58 and 106 form a disulfide. Cys-248 and Cys-296 are disulfide-bonded. N-linked (GlcNAc...) asparagine glycosylation is found at Asn-338, Asn-374, and Asn-381. Intrachain disulfides connect Cys-343/Cys-392 and Cys-441/Cys-484. The chain crosses the membrane as a helical span at residues 519 to 539 (EAIRLSLIMQLVALLLVVLWI). Over 540 to 559 (RWKCRRLRIREAWLLGTAQG) the chain is Cytoplasmic. The helical transmembrane segment at 560 to 580 (VTMLFIVTALLCCGLCNGVLI) threads the bilayer. At 581–1336 (EETEIVMPTP…RISVELPVPI (756 aa)) the chain is on the extracellular side. Ig-like C2-type domains follow at residues 589-677 (TPKP…ALEL), 686-760 (PVIS…RPFK), 777-869 (PKPF…LVVT), 873-958 (PKPT…YLSM), 965-1060 (TDTF…ELLV), 1065-1150 (PKPS…NHSD), and 1161-1242 (PKPS…EPSD). N-linked (GlcNAc...) asparagine glycosylation is found at Asn-607, Asn-747, Asn-798, Asn-846, Asn-939, Asn-986, Asn-1027, and Asn-1082. Residues Cys-703 and Cys-750 are joined by a disulfide bond. Disulfide bonds link Cys-799–Cys-849 and Cys-895–Cys-942. An intrachain disulfide couples Cys-1087 to Cys-1134. Residues Asn-1147 and Asn-1223 are each glycosylated (N-linked (GlcNAc...) asparagine). Residues Cys-1183 and Cys-1226 are joined by a disulfide bond. The segment at 1308–1336 (CNQEGEPGTPANSPSSTSQRISVELPVPI) is disordered. Polar residues predominate over residues 1317–1328 (PANSPSSTSQRI).

As to quaternary structure, interacts with INHA. In PubMed:12385827 does not interact with INHA; standard receptor binding assay. Interacts with ACVR1B; the interaction appears to be ligand-dependent as it is diminished by inhibin B and activin A. Interacts with ACVR2A, ACVR2B, ACVRL1 and BMPR1B. Interacts with HECTD1. In terms of tissue distribution, highly expressed in pancreas, testis and fetal liver. Moderately expressed in heart, prostate and small intestine. Expressed at very low levels in brain, thymus, ovary, colon, fetal lung and fetal kidney. Expressed in muscle. Isoform 3 is expressed in pituitary gland.

It is found in the membrane. It localises to the secreted. Its function is as follows. Seems to be a coreceptor in inhibin signaling, but seems not to be a high-affinity inhibin receptor. Antagonizes activin A signaling in the presence or absence of inhibin B. Necessary to mediate a specific antagonistic effect of inhibin B on activin-stimulated transcription. The polypeptide is Immunoglobulin superfamily member 1 (IGSF1) (Homo sapiens (Human)).